The sequence spans 461 residues: Gustatory and pheromone receptor 32a (461 aa).

The Cytoplasmic portion of the chain corresponds to 1-100 (MSPNTWVIEM…YSFFVRGVVH (100 aa)). A helical transmembrane segment spans residues 101–121 (ALTIFNVYSLFTPISAQLFFS). The Extracellular segment spans residues 122 to 127 (YRETDN). Residues 128–148 (VNQWIELLLCILTYTLTVFVC) traverse the membrane as a helical segment. Over 149–180 (AHNTTSMLRIMNEILQLDEEVRRQFGANLSQN) the chain is Cytoplasmic. A helical transmembrane segment spans residues 181 to 201 (FGFLVKFLVGITACQAYIIVL). Over 202–214 (KIYAVQGEITPTS) the chain is Extracellular. The helical transmembrane segment at 215-235 (YILLAFYGIQNGLTATYIVFA) threads the bilayer. The Cytoplasmic portion of the chain corresponds to 236 to 317 (SALLRIVYIR…YKGINDCCNL (82 aa)). A helical membrane pass occupies residues 318–338 (ILVSFLGYSFYTVTTNCYNLF). Over 339 to 348 (VQITGKGMVS) the chain is Extracellular. The chain crosses the membrane as a helical span at residues 349–369 (PNILQWCFAWLCLHVSLLALL). Residues 370–414 (SRSCGLTTTEANATSQILARVYAKSKEYQNIIDKFLTKSIKQEVQ) lie on the Cytoplasmic side of the membrane. A helical membrane pass occupies residues 415-435 (FTAYGFFAIDNSTLFKIFSAV). The Extracellular segment spans residues 436 to 461 (TTYLVILIQFKQLEDSKVEDPVPEQT).

This sequence belongs to the insect chemoreceptor superfamily. Gustatory receptor (GR) family. Gr21a subfamily. As to expression, expressed in the adult labellar chemosensory neurons. Expressed in tarsal neurons for male-male courtship suppression. In larvae, is expressed in neurons of the terminal external chemosensory organ, and the dorsal and posterior external chemosensory organs.

It localises to the cell membrane. Gustatory receptor which mediates acceptance or avoidance behavior, depending on its substrates. Required for the response to N,N-Diethyl-meta-toluamide (DEET), the most widely used insect repellent worldwide. Functions as a pheromone receptor for a male inhibitory pheromone and promotes male-male aggression and suppresses male-male courtship. Also promotes preferentially virgin females courting over mated females. The sequence is that of Gustatory and pheromone receptor 32a (Gr32a) from Drosophila melanogaster (Fruit fly).